Reading from the N-terminus, the 174-residue chain is ATP synthase subunit delta (174 aa).

It belongs to the ATPase delta chain family. As to quaternary structure, F-type ATPases have 2 components, F(1) - the catalytic core - and F(0) - the membrane proton channel. F(1) has five subunits: alpha(3), beta(3), gamma(1), delta(1), epsilon(1). F(0) has three main subunits: a(1), b(2) and c(10-14). The alpha and beta chains form an alternating ring which encloses part of the gamma chain. F(1) is attached to F(0) by a central stalk formed by the gamma and epsilon chains, while a peripheral stalk is formed by the delta and b chains.

It localises to the cell inner membrane. In terms of biological role, f(1)F(0) ATP synthase produces ATP from ADP in the presence of a proton or sodium gradient. F-type ATPases consist of two structural domains, F(1) containing the extramembraneous catalytic core and F(0) containing the membrane proton channel, linked together by a central stalk and a peripheral stalk. During catalysis, ATP synthesis in the catalytic domain of F(1) is coupled via a rotary mechanism of the central stalk subunits to proton translocation. This protein is part of the stalk that links CF(0) to CF(1). It either transmits conformational changes from CF(0) to CF(1) or is implicated in proton conduction. This Helicobacter hepaticus (strain ATCC 51449 / 3B1) protein is ATP synthase subunit delta.